The chain runs to 132 residues: Large-conductance mechanosensitive channel (132 aa).

Helical transmembrane passes span 10 to 30 and 76 to 96; these read FAVK…SAFG and GNFI…FLAI.

Belongs to the MscL family. Homopentamer.

It localises to the cell inner membrane. Its function is as follows. Channel that opens in response to stretch forces in the membrane lipid bilayer. May participate in the regulation of osmotic pressure changes within the cell. The sequence is that of Large-conductance mechanosensitive channel from Campylobacter hominis (strain ATCC BAA-381 / DSM 21671 / CCUG 45161 / LMG 19568 / NCTC 13146 / CH001A).